A 106-amino-acid polypeptide reads, in one-letter code: Nucleoid-associated protein Rpal_0620 (106 aa).

This sequence belongs to the YbaB/EbfC family. In terms of assembly, homodimer.

It localises to the cytoplasm. The protein resides in the nucleoid. Binds to DNA and alters its conformation. May be involved in regulation of gene expression, nucleoid organization and DNA protection. In Rhodopseudomonas palustris (strain TIE-1), this protein is Nucleoid-associated protein Rpal_0620.